The primary structure comprises 295 residues: sn-glycerol-3-phosphate transport system permease protein UgpA (295 aa).

The Cytoplasmic segment spans residues methionine 1–arginine 11. The helical transmembrane segment at tryptophan 12 to proline 32 threads the bilayer. At alanine 33–threonine 80 the chain is on the periplasmic side. The ABC transmembrane type-1 domain occupies isoleucine 76–glutamine 284. Residues phenylalanine 81–valine 101 traverse the membrane as a helical segment. Topologically, residues arginine 102–threonine 109 are cytoplasmic. A helical transmembrane segment spans residues leucine 110–phenylalanine 130. The Periplasmic portion of the chain corresponds to asparagine 131–glutamine 156. A helical transmembrane segment spans residues alanine 157–phenylalanine 177. Residues tyrosine 178–alanine 207 are Cytoplasmic-facing. Residues leucine 208–phenylalanine 228 traverse the membrane as a helical segment. The Periplasmic segment spans residues aspartate 229–aspartate 262. The helical transmembrane segment at leucine 263–valine 283 threads the bilayer. Topologically, residues glutamine 284–glutamine 295 are cytoplasmic.

This sequence belongs to the binding-protein-dependent transport system permease family. UgpAE subfamily. In terms of assembly, the complex is composed of two ATP-binding proteins (UgpC), two transmembrane proteins (UgpA and UgpE) and a solute-binding protein (UgpB).

It localises to the cell inner membrane. In terms of biological role, part of the ABC transporter complex UgpBAEC involved in sn-glycerol-3-phosphate (G3P) import. Probably responsible for the translocation of the substrate across the membrane. The protein is sn-glycerol-3-phosphate transport system permease protein UgpA (ugpA) of Escherichia coli (strain UTI89 / UPEC).